A 373-amino-acid polypeptide reads, in one-letter code: Dual-specificity RNA methyltransferase RlmN (373 aa).

Glutamate 94 functions as the Proton acceptor in the catalytic mechanism. The region spanning 100-339 is the Radical SAM core domain; sequence EEDRATLCVS…VIVRKTRGDD (240 aa). Residues cysteine 107 and cysteine 344 are joined by a disulfide bond. Positions 114, 118, and 121 each coordinate [4Fe-4S] cluster. S-adenosyl-L-methionine contacts are provided by residues 168–169, serine 200, 222–224, and asparagine 301; these read GE and SIH. Cysteine 344 serves as the catalytic S-methylcysteine intermediate.

This sequence belongs to the radical SAM superfamily. RlmN family. [4Fe-4S] cluster serves as cofactor.

Its subcellular location is the cytoplasm. The catalysed reaction is adenosine(2503) in 23S rRNA + 2 reduced [2Fe-2S]-[ferredoxin] + 2 S-adenosyl-L-methionine = 2-methyladenosine(2503) in 23S rRNA + 5'-deoxyadenosine + L-methionine + 2 oxidized [2Fe-2S]-[ferredoxin] + S-adenosyl-L-homocysteine. The enzyme catalyses adenosine(37) in tRNA + 2 reduced [2Fe-2S]-[ferredoxin] + 2 S-adenosyl-L-methionine = 2-methyladenosine(37) in tRNA + 5'-deoxyadenosine + L-methionine + 2 oxidized [2Fe-2S]-[ferredoxin] + S-adenosyl-L-homocysteine. Functionally, specifically methylates position 2 of adenine 2503 in 23S rRNA and position 2 of adenine 37 in tRNAs. m2A2503 modification seems to play a crucial role in the proofreading step occurring at the peptidyl transferase center and thus would serve to optimize ribosomal fidelity. This Shewanella loihica (strain ATCC BAA-1088 / PV-4) protein is Dual-specificity RNA methyltransferase RlmN.